Reading from the N-terminus, the 578-residue chain is MTSKKLVNSVAGCADDALAGLVACNPSLQLLQGHRVALRSDLDSLKGRVALLSGGGSGHEPAHAGFIGKGMLTGVIAGAVFTSPAVGSILAAIRAVAQAGTVGTLLIVKNYTGDRLNFGLAREQARAEGIPVEMVVVGDDSAFTVLKKAGRRGLCGTVLIHKVAGALAEAGVGLEEITDRVSVVAKAMGTLGVSLSSCSVPGSKPTFELSADEVELGLGIHGEAGVRRIKMATANEIVALMLDHMTSSSNASHVPVPPGSSVVLMVNNLGGLSFLELGIIADAAVCSLEGHGVKIARALVGTFMSALEMPGVSLTLLLVDEPLLKLIDAETTASAWPNVAKVWVTGRKRSRAAPTEPLAAPDSTTAAGEASKQMVLVLEWVCTTLLGLEEHLNALDRAAGDGDCGTTHSRAARAIXGWLKEGPPPASPAQLLSKLSFLLLEKMGGSSGALYGLFLTAAAQPLKAKTDLPAWSAAMDAGLEAMQKYGKAAPGDRTMLDSLWAAGQELQAWKSPGANMLQILTKAVKSAEAAAEATKNMEAGAGRASYISSARLDQPDPGAVAAAAILRAILEVLQSQGA.

Residues 9 to 336 (SVAGCADDAL…IDAETTASAW (328 aa)) enclose the DhaK domain. Residues 56–59 (GSGH), lysine 109, and aspartate 114 each bind dihydroxyacetone. Histidine 221 serves as the catalytic Tele-hemiaminal-histidine intermediate. Serine 350 is modified (phosphoserine). The DhaL domain maps to 372 to 571 (KQMVLVLEWV…AAAILRAILE (200 aa)). ATP-binding positions include 401–404 (DGDC), 446–447 (SS), glycine 486, and 494–495 (TM). 2 positions are modified to phosphoserine: serine 511 and serine 545. 556 to 558 (DPG) contributes to the ATP binding site.

In terms of assembly, homodimer. Interacts with IFIH1 (via the CARD domains), the interaction is inhibited by viral infection. It depends on Mg(2+) as a cofactor. Requires Mn(2+) as cofactor. The cofactor is Co(2+).

It carries out the reaction dihydroxyacetone + ATP = dihydroxyacetone phosphate + ADP + H(+). It catalyses the reaction D-glyceraldehyde + ATP = D-glyceraldehyde 3-phosphate + ADP + H(+). The enzyme catalyses FAD = riboflavin cyclic-4',5'-phosphate + AMP + H(+). Its activity is regulated as follows. Each activity is inhibited by the substrate(s) of the other. Functionally, catalyzes both the phosphorylation of dihydroxyacetone and of glyceraldehyde, and the splitting of ribonucleoside diphosphate-X compounds among which FAD is the best substrate. Represses IFIH1-mediated cellular antiviral response. This Bos taurus (Bovine) protein is Triokinase/FMN cyclase (TKFC).